The chain runs to 339 residues: UDP-galactose transporter homolog 1 (339 aa).

The Lumenal segment spans residues 1-4 (MAGS). A helical transmembrane segment spans residues 5 to 25 (TSSLVICAIGIYATFLTWALV). Topologically, residues 26–42 (QEPLATRTWPNSMGKFQ) are cytoplasmic. A helical membrane pass occupies residues 43–63 (FPNVISLIQASVAMMMGYLYL). The Lumenal portion of the chain corresponds to 64 to 106 (NWKKVEYPPRKMIKDHWKQLMLISFTQSSSGPLATTSLKHVDY). A helical membrane pass occupies residues 107-127 (LTYMLAKSCKMIPVLLVHLLL). Topologically, residues 128 to 136 (YRTPIASQK) are cytoplasmic. The helical transmembrane segment at 137-157 (KVVALLVSLGVTIFTIGGNDG) threads the bilayer. The Lumenal portion of the chain corresponds to 158–174 (KKLKRSFNESGNDNKLQ). N-linked (GlcNAc...) asparagine glycosylation is present at N165. The chain crosses the membrane as a helical span at residues 175 to 192 (GFGLLFSSLFLDGLTNAT). Residues 193–214 (QDKLLKANKAKEKGKQTLITGA) are Cytoplasmic-facing. Residues 215–235 (HLMFTLNLFVILWNILYFIVI) form a helical membrane-spanning segment. At 236-245 (DCKQWDNAVS) the chain is on the lumenal side. Residues 246 to 266 (VLTMDPQVWGYLMLYSFCGAM) form a helical membrane-spanning segment. The Cytoplasmic portion of the chain corresponds to 267-280 (GQCFIFYTLEQFGS). A helical transmembrane segment spans residues 281–303 (LVLIMITVTRKMVSMILSIIVFG). Topologically, residues 304 to 307 (KSVR) are lumenal. Residues 308 to 327 (FQQWVGMFIVFGGITWEALN) traverse the membrane as a helical segment. Residues 328–339 (KKKANIPKAKSA) lie on the Cytoplasmic side of the membrane.

This sequence belongs to the nucleotide-sugar transporter family. SLC35B subfamily.

Its subcellular location is the endoplasmic reticulum membrane. Its function is as follows. May be involved in specific transport of UDP-Gal from the cytosol to the Golgi lumen. Involved in the maintenance of optimal conditions for the folding of secretory pathway proteins in the endoplasmic reticulum. Overexpression confers resistance to the immunosuppressive drug, leflunomide. This is UDP-galactose transporter homolog 1 (HUT1) from Saccharomyces cerevisiae (strain ATCC 204508 / S288c) (Baker's yeast).